The following is a 125-amino-acid chain: Large ribosomal subunit protein bL20 (125 aa).

Belongs to the bacterial ribosomal protein bL20 family.

Functionally, binds directly to 23S ribosomal RNA and is necessary for the in vitro assembly process of the 50S ribosomal subunit. It is not involved in the protein synthesizing functions of that subunit. The chain is Large ribosomal subunit protein bL20 from Methylobacterium nodulans (strain LMG 21967 / CNCM I-2342 / ORS 2060).